Here is a 268-residue protein sequence, read N- to C-terminus: Leucyl/phenylalanyl-tRNA--protein transferase (268 aa).

This sequence belongs to the L/F-transferase family.

Its subcellular location is the cytoplasm. The enzyme catalyses N-terminal L-lysyl-[protein] + L-leucyl-tRNA(Leu) = N-terminal L-leucyl-L-lysyl-[protein] + tRNA(Leu) + H(+). It catalyses the reaction N-terminal L-arginyl-[protein] + L-leucyl-tRNA(Leu) = N-terminal L-leucyl-L-arginyl-[protein] + tRNA(Leu) + H(+). The catalysed reaction is L-phenylalanyl-tRNA(Phe) + an N-terminal L-alpha-aminoacyl-[protein] = an N-terminal L-phenylalanyl-L-alpha-aminoacyl-[protein] + tRNA(Phe). In terms of biological role, functions in the N-end rule pathway of protein degradation where it conjugates Leu, Phe and, less efficiently, Met from aminoacyl-tRNAs to the N-termini of proteins containing an N-terminal arginine or lysine. This chain is Leucyl/phenylalanyl-tRNA--protein transferase, found in Psychrobacter arcticus (strain DSM 17307 / VKM B-2377 / 273-4).